The chain runs to 368 residues: Alanine racemase (368 aa).

Lys40 functions as the Proton acceptor; specific for D-alanine in the catalytic mechanism. An N6-(pyridoxal phosphate)lysine modification is found at Lys40. Residue Arg134 coordinates substrate. Catalysis depends on Tyr263, which acts as the Proton acceptor; specific for L-alanine. Met310 lines the substrate pocket.

The protein belongs to the alanine racemase family. Requires pyridoxal 5'-phosphate as cofactor.

The enzyme catalyses L-alanine = D-alanine. It participates in amino-acid biosynthesis; D-alanine biosynthesis; D-alanine from L-alanine: step 1/1. Its function is as follows. Catalyzes the interconversion of L-alanine and D-alanine. May also act on other amino acids. This Listeria monocytogenes serovar 1/2a (strain ATCC BAA-679 / EGD-e) protein is Alanine racemase (alr).